The chain runs to 224 residues: Ribose-5-phosphate isomerase A (224 aa).

Substrate contacts are provided by residues 26 to 29, 82 to 85, and 95 to 98; these read TGST, DGAD, and KGGG. The Proton acceptor role is filled by glutamate 104. Residue lysine 122 coordinates substrate.

It belongs to the ribose 5-phosphate isomerase family. Homodimer.

The enzyme catalyses aldehydo-D-ribose 5-phosphate = D-ribulose 5-phosphate. It participates in carbohydrate degradation; pentose phosphate pathway; D-ribose 5-phosphate from D-ribulose 5-phosphate (non-oxidative stage): step 1/1. Functionally, catalyzes the reversible conversion of ribose-5-phosphate to ribulose 5-phosphate. This Lactococcus lactis subsp. cremoris (strain MG1363) protein is Ribose-5-phosphate isomerase A.